The primary structure comprises 432 residues: Tubulin-specific chaperone cofactor E-like protein (432 aa).

7 LRR repeats span residues alanine 69–asparagine 94, leucine 95–proline 117, valine 118–leucine 140, leucine 143–serine 167, threonine 168–lysine 191, phenylalanine 193–glutamine 217, and leucine 218–arginine 242. An LRRCT region spans residues isoleucine 254–phenylalanine 295. The tract at residues valine 324–isoleucine 415 is ubiquitin-like (UBL).

It is found in the cytoplasm. Its subcellular location is the cytoskeleton. In terms of biological role, acts as a regulator of tubulin stability. Involved in microtubule-dependent neuronal function. May be involved in tubulin acetylation/deacetylation pathway. The chain is Tubulin-specific chaperone cofactor E-like protein from Caenorhabditis elegans.